The chain runs to 99 residues: Nucleoid-associated protein SAG1747 (99 aa).

Positions 1–10 (MMNMQNMMRQ) are enriched in low complexity. A disordered region spans residues 1 to 20 (MMNMQNMMRQAQKLQKQMEQ).

The protein belongs to the YbaB/EbfC family. As to quaternary structure, homodimer.

The protein localises to the cytoplasm. It localises to the nucleoid. Its function is as follows. Binds to DNA and alters its conformation. May be involved in regulation of gene expression, nucleoid organization and DNA protection. The protein is Nucleoid-associated protein SAG1747 of Streptococcus agalactiae serotype V (strain ATCC BAA-611 / 2603 V/R).